A 253-amino-acid polypeptide reads, in one-letter code: Imidazole glycerol phosphate synthase subunit HisF (253 aa).

Active-site residues include Asp-11 and Asp-130.

Belongs to the HisA/HisF family. In terms of assembly, heterodimer of HisH and HisF.

It is found in the cytoplasm. The enzyme catalyses 5-[(5-phospho-1-deoxy-D-ribulos-1-ylimino)methylamino]-1-(5-phospho-beta-D-ribosyl)imidazole-4-carboxamide + L-glutamine = D-erythro-1-(imidazol-4-yl)glycerol 3-phosphate + 5-amino-1-(5-phospho-beta-D-ribosyl)imidazole-4-carboxamide + L-glutamate + H(+). The protein operates within amino-acid biosynthesis; L-histidine biosynthesis; L-histidine from 5-phospho-alpha-D-ribose 1-diphosphate: step 5/9. Functionally, IGPS catalyzes the conversion of PRFAR and glutamine to IGP, AICAR and glutamate. The HisF subunit catalyzes the cyclization activity that produces IGP and AICAR from PRFAR using the ammonia provided by the HisH subunit. In Dehalococcoides mccartyi (strain ATCC BAA-2266 / KCTC 15142 / 195) (Dehalococcoides ethenogenes (strain 195)), this protein is Imidazole glycerol phosphate synthase subunit HisF.